The chain runs to 393 residues: Phosphopentomutase (393 aa).

Mn(2+)-binding residues include Asp-11, Asp-282, His-287, Asp-323, His-324, and His-335.

This sequence belongs to the phosphopentomutase family. Mn(2+) serves as cofactor.

The protein resides in the cytoplasm. It catalyses the reaction 2-deoxy-alpha-D-ribose 1-phosphate = 2-deoxy-D-ribose 5-phosphate. The enzyme catalyses alpha-D-ribose 1-phosphate = D-ribose 5-phosphate. The protein operates within carbohydrate degradation; 2-deoxy-D-ribose 1-phosphate degradation; D-glyceraldehyde 3-phosphate and acetaldehyde from 2-deoxy-alpha-D-ribose 1-phosphate: step 1/2. Its function is as follows. Isomerase that catalyzes the conversion of deoxy-ribose 1-phosphate (dRib-1-P) and ribose 1-phosphate (Rib-1-P) to deoxy-ribose 5-phosphate (dRib-5-P) and ribose 5-phosphate (Rib-5-P), respectively. In Caldanaerobacter subterraneus subsp. tengcongensis (strain DSM 15242 / JCM 11007 / NBRC 100824 / MB4) (Thermoanaerobacter tengcongensis), this protein is Phosphopentomutase.